The primary structure comprises 582 residues: DBIRD complex subunit ZNF326 (582 aa).

The segment at 1-124 (MDFEDDYTHS…YRNSLDSFGG (124 aa)) is mediates transcriptional activation. A phosphoserine mark is found at Ser-48, Ser-56, Ser-63, Ser-69, Ser-81, Ser-82, Ser-91, Ser-106, Ser-114, Ser-118, Ser-121, and Ser-137. Lys-140 is covalently cross-linked (Glycyl lysine isopeptide (Lys-Gly) (interchain with G-Cter in SUMO2)). The disordered stretch occupies residues 154–194 (YSSYSSFSSPHMKPAPVGSRGRGTPAYPESTFGSRNYDAFG). At Arg-173 the chain carries Omega-N-methylarginine. Ser-212 carries the post-translational modification Phosphoserine. Position 235 is an omega-N-methylarginine (Arg-235). The Bipartite nuclear localization signal signature appears at 238 to 260 (KRKMMQPFNKPSGTFIKKPKLAK). Lys-240 participates in a covalent cross-link: Glycyl lysine isopeptide (Lys-Gly) (interchain with G-Cter in SUMO2). Residues 243–302 (QPFNKPSGTFIKKPKLAKPMEKISLSKSPTKTDPKNEEEEKRRIEARREKQRRRREKNSE) form a disordered region. Lys-247 bears the N6-acetyllysine; alternate mark. A Glycyl lysine isopeptide (Lys-Gly) (interchain with G-Cter in SUMO2); alternate cross-link involves residue Lys-247. The residue at position 249 (Ser-249) is a Phosphoserine. Thr-251 carries the post-translational modification Phosphothreonine. Residues Lys-254 and Lys-264 each participate in a glycyl lysine isopeptide (Lys-Gly) (interchain with G-Cter in SUMO2) cross-link. Position 270 is a phosphoserine (Ser-270). The span at 272–290 (TKTDPKNEEEEKRRIEARR) shows a compositional bias: basic and acidic residues. The segment at 314–336 (CSFCKFRTFEEKDIELHLESSSH) adopts a C2H2 AKAP95-type 1 zinc-finger fold. Lys-401 participates in a covalent cross-link: Glycyl lysine isopeptide (Lys-Gly) (interchain with G-Cter in SUMO2). A C2H2 AKAP95-type 2 zinc finger spans residues 407–430 (CSACSVYIPALHSSVQQHLKSPDH). Glycyl lysine isopeptide (Lys-Gly) (interchain with G-Cter in SUMO2) cross-links involve residues Lys-459 and Lys-467. The interval 472–582 (FEIQDHSQDQ…DFPVEQPEEN (111 aa)) is disordered. A compositionally biased stretch (acidic residues) spans 483 to 523 (IEGDEEDEEKIDEPIEEEEDEDEEEEAEEVGEVEEVEEVEE). The span at 530–545 (EGEGNIQGVGEGGEVG) shows a compositional bias: gly residues. Over residues 552–567 (GVGEVEEVEELEEETA) the composition is skewed to acidic residues.

This sequence belongs to the AKAP95 family. In terms of assembly, component of the DBIRD complex. Interacts with CCAR2; the interaction is direct.

It localises to the nucleus matrix. Functionally, core component of the DBIRD complex, a multiprotein complex that acts at the interface between core mRNP particles and RNA polymerase II (RNAPII) and integrates transcript elongation with the regulation of alternative splicing: the DBIRD complex affects local transcript elongation rates and alternative splicing of a large set of exons embedded in (A + T)-rich DNA regions. May play a role in neuronal differentiation and is able to bind DNA and activate expression in vitro. The sequence is that of DBIRD complex subunit ZNF326 (ZNF326) from Homo sapiens (Human).